A 416-amino-acid polypeptide reads, in one-letter code: Enterobactin exporter EntS (416 aa).

Over Met-1–Ala-21 the chain is Cytoplasmic. The chain crosses the membrane as a helical span at residues Val-22 to Val-42. Topologically, residues Gln-43–Gly-55 are periplasmic. A helical transmembrane segment spans residues Leu-56 to Ala-76. Topologically, residues Asp-77–Lys-83 are cytoplasmic. Residues Val-84–Leu-104 traverse the membrane as a helical segment. Over Leu-105–Ser-109 the chain is Periplasmic. Residues Leu-110 to Ala-130 traverse the membrane as a helical segment. Over Leu-131–Arg-156 the chain is Cytoplasmic. The helical transmembrane segment at Leu-157 to Trp-177 threads the bilayer. Position 178 (Asn-178) is a topological domain, periplasmic. The helical transmembrane segment at Tyr-179 to Leu-199 threads the bilayer. At Pro-200–Arg-218 the chain is on the cytoplasmic side. A helical transmembrane segment spans residues Phe-219–Ala-239. Residues Ser-240–Ser-256 are Periplasmic-facing. The chain crosses the membrane as a helical span at residues Ala-257 to Thr-277. Residues Ser-278 to Pro-287 are Cytoplasmic-facing. The helical transmembrane segment at Gly-288–Leu-307 threads the bilayer. Residues Met-308–Leu-313 lie on the Periplasmic side of the membrane. Residues Gly-314–Leu-336 traverse the membrane as a helical segment. At Gln-337 to Asn-356 the chain is on the cytoplasmic side. The helical transmembrane segment at Val-357–Val-377 threads the bilayer. Ala-378 is a topological domain (periplasmic). The helical transmembrane segment at Ser-379–Val-399 threads the bilayer. At Glu-400 to Ser-416 the chain is on the cytoplasmic side.

Belongs to the major facilitator superfamily. EntS (TC 2.A.1.38) family.

The protein localises to the cell inner membrane. Component of an export pathway for enterobactin. The polypeptide is Enterobactin exporter EntS (Escherichia coli (strain 55989 / EAEC)).